The primary structure comprises 186 residues: Protein MTH_152 (186 aa).

It belongs to the flavoredoxin family. As to quaternary structure, homodimer. FMN is required as a cofactor.

The protein is Protein MTH_152 of Methanothermobacter thermautotrophicus (strain ATCC 29096 / DSM 1053 / JCM 10044 / NBRC 100330 / Delta H) (Methanobacterium thermoautotrophicum).